The primary structure comprises 419 residues: CinA-like protein (419 aa).

This sequence belongs to the CinA family.

The sequence is that of CinA-like protein from Synechococcus sp. (strain CC9902).